The sequence spans 333 residues: NADH-quinone oxidoreductase subunit H (333 aa).

The next 8 helical transmembrane spans lie at 8–28 (VLAAALIALAFVAVNAAYLVW), 75–95 (ILFMVAPVLAMFPALMSFVTI), 108–128 (IGLLVILAFASFAGLAILLAG), 154–174 (MLITAITVVLVSGSVDFIEIV), 191–211 (PGLFNIFMPISFLIFFICSLA), 251–271 (IVIGACLTTLLFLGGWDCPFG), 273–293 (FPGVWWFLIKIYILIFTFIWI), and 312–332 (ILIPLSLINLLLTAGFIKVFA).

It belongs to the complex I subunit 1 family. NDH-1 is composed of 14 different subunits. Subunits NuoA, H, J, K, L, M, N constitute the membrane sector of the complex.

It localises to the cell inner membrane. The catalysed reaction is a quinone + NADH + 5 H(+)(in) = a quinol + NAD(+) + 4 H(+)(out). NDH-1 shuttles electrons from NADH, via FMN and iron-sulfur (Fe-S) centers, to quinones in the respiratory chain. The immediate electron acceptor for the enzyme in this species is believed to be ubiquinone. Couples the redox reaction to proton translocation (for every two electrons transferred, four hydrogen ions are translocated across the cytoplasmic membrane), and thus conserves the redox energy in a proton gradient. This subunit may bind ubiquinone. This chain is NADH-quinone oxidoreductase subunit H, found in Desulfotalea psychrophila (strain LSv54 / DSM 12343).